The sequence spans 304 residues: Probable porphobilinogen deaminase (304 aa).

Residue cysteine 240 is modified to S-(dipyrrolylmethanemethyl)cysteine.

It belongs to the HMBS family. Requires dipyrromethane as cofactor.

The catalysed reaction is 4 porphobilinogen + H2O = hydroxymethylbilane + 4 NH4(+). The protein operates within porphyrin-containing compound metabolism; protoporphyrin-IX biosynthesis; coproporphyrinogen-III from 5-aminolevulinate: step 2/4. Tetrapolymerization of the monopyrrole PBG into the hydroxymethylbilane pre-uroporphyrinogen in several discrete steps. The chain is Probable porphobilinogen deaminase from Ignicoccus hospitalis (strain KIN4/I / DSM 18386 / JCM 14125).